The sequence spans 319 residues: Methionyl-tRNA formyltransferase (319 aa).

Position 116 to 119 (116 to 119) interacts with (6S)-5,6,7,8-tetrahydrofolate; that stretch reads SLLP.

This sequence belongs to the Fmt family.

It carries out the reaction L-methionyl-tRNA(fMet) + (6R)-10-formyltetrahydrofolate = N-formyl-L-methionyl-tRNA(fMet) + (6S)-5,6,7,8-tetrahydrofolate + H(+). Functionally, attaches a formyl group to the free amino group of methionyl-tRNA(fMet). The formyl group appears to play a dual role in the initiator identity of N-formylmethionyl-tRNA by promoting its recognition by IF2 and preventing the misappropriation of this tRNA by the elongation apparatus. This Chlorobium phaeovibrioides (strain DSM 265 / 1930) (Prosthecochloris vibrioformis (strain DSM 265)) protein is Methionyl-tRNA formyltransferase.